Consider the following 860-residue polypeptide: Leucine--tRNA ligase (860 aa).

The 'HIGH' region signature appears at 42 to 52 (PYPSGRLHMGH). Positions 619-623 (KMSKS) match the 'KMSKS' region motif. Lys-622 contacts ATP.

It belongs to the class-I aminoacyl-tRNA synthetase family.

It is found in the cytoplasm. It carries out the reaction tRNA(Leu) + L-leucine + ATP = L-leucyl-tRNA(Leu) + AMP + diphosphate. In Citrobacter koseri (strain ATCC BAA-895 / CDC 4225-83 / SGSC4696), this protein is Leucine--tRNA ligase.